The sequence spans 208 residues: Coiled-coil domain-containing protein 25 (208 aa).

Over 1-105 (MVFYFTSSSV…SNLKKTADMD (105 aa)) the chain is Extracellular. Residues 21-25 (KDKYE) are DNA-binding. Lysine 23 bears the N6-acetyllysine mark. A helical transmembrane segment spans residues 106-122 (VGQIGFHRQKDVKIVTV). Positions 117–187 (VKIVTVEKKV…REMDELRSYS (71 aa)) form a coiled coil. The Cytoplasmic segment spans residues 123–208 (EKKVNEILNR…QDGNDSDEFM (86 aa)). Residues 144-184 (LAAEKEGRDREERNEKKAQIQEMKRKEKEEMKKKREMDELR) are compositionally biased toward basic and acidic residues. A disordered region spans residues 144 to 208 (LAAEKEGRDR…QDGNDSDEFM (65 aa)). A Phosphoserine modification is found at serine 204.

It belongs to the CCDC25 family. Interacts (via cytoplasmic region) with ILK.

The protein resides in the cell membrane. It is found in the endomembrane system. Its function is as follows. Transmembrane receptor that senses neutrophil extracellular traps (NETs) and triggers the ILK-PARVB pathway to enhance cell motility. NETs are mainly composed of DNA fibers and are released by neutrophils to bind pathogens during inflammation. Formation of NETs is also associated with cancer metastasis, NET-DNA acting as a chemotactic factor to attract cancer cells. Specifically binds NETs on its extracellular region, in particular the 8-OHdG-enriched DNA present in NETs, and recruits ILK, initiating the ILK-PARVB cascade to induce cytoskeleton rearrangement and directional migration of cells. In the context of cancer, promotes cancer metastasis by sensing NETs and promoting migration of tumor cells. In Mus musculus (Mouse), this protein is Coiled-coil domain-containing protein 25.